The sequence spans 180 residues: Ribosome-recycling factor (180 aa).

It belongs to the RRF family.

The protein localises to the cytoplasm. In terms of biological role, responsible for the release of ribosomes from messenger RNA at the termination of protein biosynthesis. May increase the efficiency of translation by recycling ribosomes from one round of translation to another. This chain is Ribosome-recycling factor, found in Chlamydia abortus (strain DSM 27085 / S26/3) (Chlamydophila abortus).